We begin with the raw amino-acid sequence, 242 residues long: UPF0246 protein SPD_1378 (242 aa).

The protein belongs to the UPF0246 family.

The chain is UPF0246 protein SPD_1378 from Streptococcus pneumoniae serotype 2 (strain D39 / NCTC 7466).